The primary structure comprises 132 residues: Fatty acid-binding protein, intestinal (132 aa).

Ala2 bears the N-acetylalanine mark. Trp83 and Arg107 together coordinate hexadecanoate. Residues Trp83 and Arg107 each coordinate tetradecanoate.

The protein belongs to the calycin superfamily. Fatty-acid binding protein (FABP) family.

It is found in the cytoplasm. In terms of biological role, FABPs are thought to play a role in the intracellular transport of long-chain fatty acids and their acyl-CoA esters. FABP2 is probably involved in triglyceride-rich lipoprotein synthesis. Binds saturated long-chain fatty acids with a high affinity, but binds with a lower affinity to unsaturated long-chain fatty acids. FABP2 may also help maintain energy homeostasis by functioning as a lipid sensor. The protein is Fatty acid-binding protein, intestinal (FABP2) of Bos taurus (Bovine).